A 270-amino-acid chain; its full sequence is tRNA pseudouridine synthase B (270 aa).

Residue aspartate 49 is the Nucleophile of the active site.

The protein belongs to the pseudouridine synthase TruB family. Type 1 subfamily.

It carries out the reaction uridine(55) in tRNA = pseudouridine(55) in tRNA. In terms of biological role, responsible for synthesis of pseudouridine from uracil-55 in the psi GC loop of transfer RNAs. The chain is tRNA pseudouridine synthase B from Bartonella quintana (strain Toulouse) (Rochalimaea quintana).